Consider the following 174-residue polypeptide: Ribosome maturation factor RimM (174 aa).

A PRC barrel domain is found at 98-171 (EGEFYFHEII…KIEIELMEGL (74 aa)).

This sequence belongs to the RimM family. Binds ribosomal protein uS19.

It is found in the cytoplasm. Its function is as follows. An accessory protein needed during the final step in the assembly of 30S ribosomal subunit, possibly for assembly of the head region. Essential for efficient processing of 16S rRNA. May be needed both before and after RbfA during the maturation of 16S rRNA. It has affinity for free ribosomal 30S subunits but not for 70S ribosomes. The sequence is that of Ribosome maturation factor RimM from Bacillus subtilis (strain 168).